The chain runs to 130 residues: Small ribosomal subunit protein uS9 (130 aa).

Residues 111–130 (KERRKYGLKKARKAPQFSKR) are disordered.

This sequence belongs to the universal ribosomal protein uS9 family.

The chain is Small ribosomal subunit protein uS9 from Thermoanaerobacter sp. (strain X514).